Reading from the N-terminus, the 378-residue chain is O-glycoside alpha-1,2-mannosyltransferase homolog 3 (378 aa).

Residues 1-6 (MGIPKS) are Cytoplasmic-facing. The chain crosses the membrane as a helical; Signal-anchor for type II membrane protein span at residues 7-24 (SIYFCILLFCIISFYLQS). Topologically, residues 25–378 (SKDGPKELKV…AIKWLENINS (354 aa)) are lumenal. E276 serves as the catalytic Nucleophile.

It belongs to the glycosyltransferase 15 family.

Its subcellular location is the endoplasmic reticulum membrane. The protein resides in the golgi apparatus membrane. Its function is as follows. Probable mannosyltransferase involved in O-glycosylation of cell wall and secreted proteins. The polypeptide is O-glycoside alpha-1,2-mannosyltransferase homolog 3 (omh3) (Schizosaccharomyces pombe (strain 972 / ATCC 24843) (Fission yeast)).